The sequence spans 1730 residues: SH3 and multiple ankyrin repeat domains protein 3 (1730 aa).

The tract at residues 1–75 (MDGPGASAVV…KFLDEERLLQ (75 aa)) is intramolecular interaction with the ANK repeats. The residue at position 122 (Y122) is a Phosphotyrosine. ANK repeat units lie at residues 148-178 (SGECPLSLAAQLDNATDLLKVLRNGGAHLDF), 182-211 (DGLTAVHCATRQRNAGALTTLLDLGASPDY), 215-245 (RGLTPLYHSALGGGDALCCELLLHDHAQLGT), 249-278 (NGWQEIHQACRFGHVQHLEHLLFYGANMGA), 282-311 (SGNTALHICALYNQESCARVLLFRGANKDV), and 315-345 (NSQTAFQVAIIAGNFELAEVIKTHKDSDVVP). A disordered region spans residues 354 to 466 (KRRRLAGPSG…PPPRGPKRKL (113 aa)). Phosphoserine is present on residues S373, S375, S387, and S394. Positions 404–415 (LQEEKDRDRDGE) are enriched in basic and acidic residues. Over residues 444-460 (APGPGPASPAPPAPPPR) the composition is skewed to pro residues. The SH3 domain maps to 470 to 529 (VPGRKFIAVKAHSPQGEGEIPLHRGEAVKVLSIGEGGFWEGTVKGRTGWFPADCVEEVQM). The residue at position 482 (S482) is a Phosphoserine. Y555 is modified (phosphotyrosine). Residues 570 to 664 (VAILQKRDHE…RLVMKVVSVT (95 aa)) form the PDZ domain. The disordered stretch occupies residues 664 to 688 (TRKPEEDGARRRAPPPPKRAPSTTL). A required for interaction with ABI1 region spans residues 677–684 (PPPPKRAP). A phosphoserine mark is found at S694, S781, S790, and S801. Disordered regions lie at residues 760 to 1460 (QGLP…AAGP) and 1475 to 1524 (GDPV…SLLD). The span at 812-844 (IPPPPQTAPPPPPAPYYFDSGPPPTFSPPPPPG) shows a compositional bias: pro residues. Positions 857-869 (GLEARLGAGAAGL) are enriched in low complexity. Residues S890 and S897 each carry the phosphoserine modification. T912 is subject to Phosphothreonine. Position 930 is a phosphotyrosine (Y930). Residue R965 is modified to Asymmetric dimethylarginine. S995 is subject to Phosphoserine. Residues 1016-1026 (VKERRLEERRR) show a composition bias toward basic and acidic residues. Positions 1078–1092 (LKPLVGGPSLGPSGS) are enriched in low complexity. The segment covering 1122 to 1131 (SQTPSRSPTP) has biased composition (polar residues). At T1130 the chain carries Phosphothreonine. S1134, S1159, S1163, and S1166 each carry phosphoserine. Residues 1174–1194 (ARREAEKPPREERKSPEDKKS) show a composition bias toward basic and acidic residues. At T1234 the chain carries Phosphothreonine. Positions 1235–1250 (PELAPAPMQAAAVAEP) are enriched in low complexity. 2 stretches are compositionally biased toward pro residues: residues 1251 to 1261 (MPSPRAQPPGS) and 1321 to 1333 (TPPPGPGPLPTTV). A Phosphoserine modification is found at S1253. The span at 1360 to 1370 (ADTRSSSDPHL) shows a compositional bias: basic and acidic residues. The segment covering 1371 to 1392 (ETTSTISTVSSMSTLSSESGEL) has biased composition (low complexity). Residues 1410–1416 (PPVPPKP) carry the SH3-binding motif. Residue S1420 is modified to Phosphoserine. Residues 1494-1514 (ISELSSRLQQLNKDTRSLGEE) are a coiled coil. A compositionally biased stretch (polar residues) spans 1495–1505 (SELSSRLQQLN). Phosphoserine occurs at positions 1510, 1521, 1529, and 1539. Disordered regions lie at residues 1546-1584 (ISAQRSPGGPGGGASYSVRPSGRYPVARRAPSPVKPASL) and 1627-1663 (VRSVSARSRSPSPSPLPSPSPGSGPSAGPRRPFQQKP). The span at 1627 to 1637 (VRSVSARSRSP) shows a compositional bias: low complexity. A phosphoserine mark is found at S1634, S1636, and S1638. The span at 1638–1648 (SPSPLPSPSPG) shows a compositional bias: pro residues. Low complexity predominate over residues 1649 to 1658 (SGPSAGPRRP). Positions 1667–1730 (WSKFDVGDWL…ERALRQLDGS (64 aa)) constitute an SAM domain.

Belongs to the SHANK family. May homomultimerize via its SAM domain. Interacts with BAIAP2, DBNL and SLC17A7/VGLUT1. Interacts with DLGAP1/GKAP, GRM1/MGLUR1, GRM5/MGLUR5 and LZTS3 C-termini via its PDZ domain. Interacts with ABI1, HOMER1, HOMER2, HOMER3 and CTTN/cortactin SH3 domain. Is part of a complex with DLG4/PSD-95 and DLGAP1/GKAP. Interacts (via PDZ domain) with the GRIA1 subunit of the AMPA receptor (via PDZ-binding motif). Interacts with WASF1 and CYFIP2; the interactions mediate the association of SHANK3 with the WAVE1 complex. Interacts with ARPC2; the interaction probably mediates the association of SHANK3 with the Arp2/3 complex. Interacts (via ANK repeats) with SHARPIN and SPTAN1. Interacts (via PDZ domain) with ARHGAP44 (probably via PDZ-binding motif); the interaction takes place in dendritic spines and promotes GRIA1 exocytosis. Interacts with CAMK2A. Interacts with DIP2A. Interacts with ADGRL3. In brain, highly expressed in striatum, thalamus, hippocampus and granule cells of the cerebellum.

The protein localises to the cytoplasm. It localises to the synapse. It is found in the postsynaptic density. Its subcellular location is the cell projection. The protein resides in the dendritic spine. Functionally, major scaffold postsynaptic density protein which interacts with multiple proteins and complexes to orchestrate the dendritic spine and synapse formation, maturation and maintenance. Interconnects receptors of the postsynaptic membrane including NMDA-type and metabotropic glutamate receptors via complexes with GKAP/PSD-95 and HOMER, respectively, and the actin-based cytoskeleton. Plays a role in the structural and functional organization of the dendritic spine and synaptic junction through the interaction with Arp2/3 and WAVE1 complex as well as the promotion of the F-actin clusters. By way of this control of actin dynamics, participates in the regulation of developing neurons growth cone motility and the NMDA receptor-signaling. Also modulates GRIA1 exocytosis and GRM5/MGLUR5 expression and signaling to control the AMPA and metabotropic glutamate receptor-mediated synaptic transmission and plasticity. May be required at an early stage of synapse formation and be inhibited by IGF1 to promote synapse maturation. This chain is SH3 and multiple ankyrin repeat domains protein 3 (Shank3), found in Mus musculus (Mouse).